The sequence spans 350 residues: Selenide, water dikinase (350 aa).

Cys-17 is a catalytic residue. ATP is bound by residues Lys-20 and Leu-48–Asp-50. Position 51 (Asp-51) interacts with Mg(2+). ATP is bound by residues Asp-68, Asp-91, and Gly-139–Ser-141. Residue Asp-91 participates in Mg(2+) binding. Asp-229 provides a ligand contact to Mg(2+).

This sequence belongs to the selenophosphate synthase 1 family. Class I subfamily. In terms of assembly, homodimer. It depends on Mg(2+) as a cofactor.

The enzyme catalyses hydrogenselenide + ATP + H2O = selenophosphate + AMP + phosphate + 2 H(+). Functionally, synthesizes selenophosphate from selenide and ATP. The polypeptide is Selenide, water dikinase (Bdellovibrio bacteriovorus (strain ATCC 15356 / DSM 50701 / NCIMB 9529 / HD100)).